A 635-amino-acid chain; its full sequence is Threonine--tRNA ligase (635 aa).

The TGS domain occupies 1–61 (MVSIRLPDGS…DRDASLAIVT (61 aa)). The segment at 242 to 533 (DHRKLGKQLD…LIEHHAGAMP (292 aa)) is catalytic. Zn(2+) is bound by residues Cys-333, His-384, and His-510.

It belongs to the class-II aminoacyl-tRNA synthetase family. As to quaternary structure, homodimer. Requires Zn(2+) as cofactor.

Its subcellular location is the cytoplasm. It catalyses the reaction tRNA(Thr) + L-threonine + ATP = L-threonyl-tRNA(Thr) + AMP + diphosphate + H(+). In terms of biological role, catalyzes the attachment of threonine to tRNA(Thr) in a two-step reaction: L-threonine is first activated by ATP to form Thr-AMP and then transferred to the acceptor end of tRNA(Thr). Also edits incorrectly charged L-seryl-tRNA(Thr). In Burkholderia cenocepacia (strain ATCC BAA-245 / DSM 16553 / LMG 16656 / NCTC 13227 / J2315 / CF5610) (Burkholderia cepacia (strain J2315)), this protein is Threonine--tRNA ligase.